An 888-amino-acid polypeptide reads, in one-letter code: Isoleucine--tRNA ligase (888 aa).

Positions 61–71 (PYANGSIHIGH) match the 'HIGH' region motif. Glu551 contributes to the L-isoleucyl-5'-AMP binding site. The 'KMSKS' region signature appears at 592-596 (KMSKQ). Lys595 serves as a coordination point for ATP. Zn(2+)-binding residues include Cys862, Cys865, Cys879, and Cys882.

This sequence belongs to the class-I aminoacyl-tRNA synthetase family. IleS type 1 subfamily. As to quaternary structure, monomer. The cofactor is Zn(2+).

Its subcellular location is the cytoplasm. It carries out the reaction tRNA(Ile) + L-isoleucine + ATP = L-isoleucyl-tRNA(Ile) + AMP + diphosphate. Its function is as follows. Catalyzes the attachment of isoleucine to tRNA(Ile). As IleRS can inadvertently accommodate and process structurally similar amino acids such as valine, to avoid such errors it has two additional distinct tRNA(Ile)-dependent editing activities. One activity is designated as 'pretransfer' editing and involves the hydrolysis of activated Val-AMP. The other activity is designated 'posttransfer' editing and involves deacylation of mischarged Val-tRNA(Ile). In Mycoplasmopsis pulmonis (strain UAB CTIP) (Mycoplasma pulmonis), this protein is Isoleucine--tRNA ligase.